The sequence spans 66 residues: Large ribosomal subunit protein uL29 (66 aa).

The protein belongs to the universal ribosomal protein uL29 family.

The sequence is that of Large ribosomal subunit protein uL29 from Sinorhizobium fredii (strain NBRC 101917 / NGR234).